We begin with the raw amino-acid sequence, 197 residues long: Anthranilate synthase component 2 (197 aa).

A Glutamine amidotransferase type-1 domain is found at 5–197 (KVLVIDNIDS…LIKNFVESEY (193 aa)). Position 55–57 (55–57 (GPK)) interacts with L-glutamine. The Nucleophile; for GATase activity role is filled by cysteine 80. L-glutamine-binding positions include glutamine 84 and 130 to 131 (SL). Active-site for GATase activity residues include histidine 168 and glutamate 170.

Heterotetramer consisting of two non-identical subunits: a beta subunit (TrpG) and a large alpha subunit (TrpE).

The catalysed reaction is chorismate + L-glutamine = anthranilate + pyruvate + L-glutamate + H(+). Its pathway is amino-acid biosynthesis; L-tryptophan biosynthesis; L-tryptophan from chorismate: step 1/5. In terms of biological role, part of a heterotetrameric complex that catalyzes the two-step biosynthesis of anthranilate, an intermediate in the biosynthesis of L-tryptophan. In the first step, the glutamine-binding beta subunit (TrpG) of anthranilate synthase (AS) provides the glutamine amidotransferase activity which generates ammonia as a substrate that, along with chorismate, is used in the second step, catalyzed by the large alpha subunit of AS (TrpE) to produce anthranilate. In the absence of TrpG, TrpE can synthesize anthranilate directly from chorismate and high concentrations of ammonia. The sequence is that of Anthranilate synthase component 2 (trpG) from Methanocaldococcus jannaschii (strain ATCC 43067 / DSM 2661 / JAL-1 / JCM 10045 / NBRC 100440) (Methanococcus jannaschii).